The chain runs to 627 residues: Phosphomethylpyrimidine synthase (627 aa).

The interval 1 to 21 (MSVQSNKNLSESAQVDQQSIQ) is disordered. Residues N231, M260, Y289, H325, 345–347 (SRG), 386–389 (DGLR), and E425 each bind substrate. H429 lines the Zn(2+) pocket. Y452 contacts substrate. Zn(2+) is bound at residue H493. The [4Fe-4S] cluster site is built by C573, C576, and C581.

The protein belongs to the ThiC family. As to quaternary structure, homodimer. Requires [4Fe-4S] cluster as cofactor.

The enzyme catalyses 5-amino-1-(5-phospho-beta-D-ribosyl)imidazole + S-adenosyl-L-methionine = 4-amino-2-methyl-5-(phosphooxymethyl)pyrimidine + CO + 5'-deoxyadenosine + formate + L-methionine + 3 H(+). Its pathway is cofactor biosynthesis; thiamine diphosphate biosynthesis. Functionally, catalyzes the synthesis of the hydroxymethylpyrimidine phosphate (HMP-P) moiety of thiamine from aminoimidazole ribotide (AIR) in a radical S-adenosyl-L-methionine (SAM)-dependent reaction. This Stutzerimonas stutzeri (strain A1501) (Pseudomonas stutzeri) protein is Phosphomethylpyrimidine synthase.